Reading from the N-terminus, the 427-residue chain is Diaminobutyrate--2-oxoglutarate transaminase (427 aa).

K269 carries the post-translational modification N6-(pyridoxal phosphate)lysine.

Belongs to the class-III pyridoxal-phosphate-dependent aminotransferase family. It depends on pyridoxal 5'-phosphate as a cofactor.

The enzyme catalyses L-2,4-diaminobutanoate + 2-oxoglutarate = L-aspartate 4-semialdehyde + L-glutamate. The protein operates within amine and polyamine biosynthesis; ectoine biosynthesis; L-ectoine from L-aspartate 4-semialdehyde: step 1/3. Functionally, catalyzes reversively the conversion of L-aspartate beta-semialdehyde (ASA) to L-2,4-diaminobutyrate (DABA) by transamination with L-glutamate. This is Diaminobutyrate--2-oxoglutarate transaminase (ectB) from Halalkalibacterium halodurans (strain ATCC BAA-125 / DSM 18197 / FERM 7344 / JCM 9153 / C-125) (Bacillus halodurans).